The following is a 138-amino-acid chain: MCSAGQLLGGGGGGGGSGGERDEDRDALAERAAAGTEQESGASPRRRGRRPLEEREQDIEESQNHTGEPVGDDYKKMGTLFGELNKSLLNMGFTRMYFGEQIVEPVIVIFFWVMLWFLGLPAFGLVALLCLVIIYVQQ.

A disordered region spans residues Met1–Asp73. Over residues Leu7–Gly18 the composition is skewed to gly residues. The segment covering Gly19–Ala29 has biased composition (basic and acidic residues). The span at Glu30 to Ser43 shows a compositional bias: low complexity. The helical transmembrane segment at Val106 to Val126 threads the bilayer.

The protein belongs to the FAM241 family.

The protein localises to the membrane. This is an uncharacterized protein from Bos taurus (Bovine).